The following is a 266-amino-acid chain: DNA-directed RNA polymerase subunit Rpo3 (266 aa).

[3Fe-4S] cluster is bound by residues cysteine 205, cysteine 208, and cysteine 211.

Belongs to the archaeal Rpo3/eukaryotic RPB3 RNA polymerase subunit family. As to quaternary structure, part of the RNA polymerase complex. It depends on [3Fe-4S] cluster as a cofactor.

Its subcellular location is the cytoplasm. It catalyses the reaction RNA(n) + a ribonucleoside 5'-triphosphate = RNA(n+1) + diphosphate. Functionally, DNA-dependent RNA polymerase (RNAP) catalyzes the transcription of DNA into RNA using the four ribonucleoside triphosphates as substrates. This chain is DNA-directed RNA polymerase subunit Rpo3, found in Methanosarcina acetivorans (strain ATCC 35395 / DSM 2834 / JCM 12185 / C2A).